A 414-amino-acid chain; its full sequence is tRNA N6-adenosine threonylcarbamoyltransferase, mitochondrial (414 aa).

The N-terminal 29 residues, 1–29 (MLILTKTAGVFFKPSKRKVYEFLRSFNFH), are a transit peptide targeting the mitochondrion. 2 positions are modified to N6-acetyllysine: lysine 74 and lysine 140. Positions 147 and 151 each coordinate a divalent metal cation. Substrate is bound by residues 169-173 (LISGG) and aspartate 202. Lysine 203 carries the N6-acetyllysine modification. Substrate contacts are provided by glycine 222 and glutamate 226. N6-acetyllysine is present on residues lysine 230, lysine 240, and lysine 299. Residues 329–330 (SN) and threonine 357 contribute to the substrate site. Aspartate 358 contacts a divalent metal cation.

The protein belongs to the KAE1 / TsaD family. Monomer. A divalent metal cation is required as a cofactor. Widely expressed, with maximum expression in pituitary gland, prostate, rectum and uterus.

Its subcellular location is the mitochondrion. The enzyme catalyses L-threonylcarbamoyladenylate + adenosine(37) in tRNA = N(6)-L-threonylcarbamoyladenosine(37) in tRNA + AMP + H(+). In terms of biological role, required for the formation of a threonylcarbamoyl group on adenosine at position 37 (t(6)A37) in mitochondrial tRNAs that read codons beginning with adenine. Probably involved in the transfer of the threonylcarbamoyl moiety of threonylcarbamoyl-AMP (TC-AMP) to the N6 group of A37. Involved in mitochondrial genome maintenance. The sequence is that of tRNA N6-adenosine threonylcarbamoyltransferase, mitochondrial from Homo sapiens (Human).